The sequence spans 203 residues: Non-histone protein 10 (203 aa).

Position 2 is an N-acetylserine (serine 2). Disordered stretches follow at residues 78–97 (KSKT…PKRP) and 161–203 (ISNI…VSSN). The HMG box DNA-binding region spans 94-158 (PKRPTNAYLL…RYQMEMEIYN (65 aa)).

Component of the chromatin-remodeling INO80 complex, at least composed of ARP4, ARP5, ARP8, RVB1, RVB2, TAF14, NHP10, IES1, IES3, IES4, IES6, ACT1, IES2, IES5 and INO80.

The protein localises to the nucleus. Probably involved in transcription regulation via its interaction with the INO80 complex, a chromatin remodeling complex. This chain is Non-histone protein 10 (NHP10), found in Saccharomyces cerevisiae (strain ATCC 204508 / S288c) (Baker's yeast).